The following is a 310-amino-acid chain: Methionyl-tRNA formyltransferase (310 aa).

110–113 contributes to the (6S)-5,6,7,8-tetrahydrofolate binding site; that stretch reads SLLP.

This sequence belongs to the Fmt family.

It catalyses the reaction L-methionyl-tRNA(fMet) + (6R)-10-formyltetrahydrofolate = N-formyl-L-methionyl-tRNA(fMet) + (6S)-5,6,7,8-tetrahydrofolate + H(+). Attaches a formyl group to the free amino group of methionyl-tRNA(fMet). The formyl group appears to play a dual role in the initiator identity of N-formylmethionyl-tRNA by promoting its recognition by IF2 and preventing the misappropriation of this tRNA by the elongation apparatus. The chain is Methionyl-tRNA formyltransferase from Clostridium acetobutylicum (strain ATCC 824 / DSM 792 / JCM 1419 / IAM 19013 / LMG 5710 / NBRC 13948 / NRRL B-527 / VKM B-1787 / 2291 / W).